The chain runs to 859 residues: Nitrate reductase [NADPH] (859 aa).

Mo-molybdopterin is bound at residue Cys137. The region spanning 502–578 is the Cytochrome b5 heme-binding domain; that stretch reads DVVIKYSEFE…LPSMHLGRLE (77 aa). Positions 538 and 561 each coordinate heme. The 112-residue stretch at 602–713 folds into the FAD-binding FR-type domain; the sequence is RKWHKITLAE…KGPVGEFEYV (112 aa). FAD-binding positions include 655–658, 672–676, Phe677, 687–689, Ser737, and Thr740; these read RAYT, LIKVY, and IMT. 829 to 838 contacts NADP(+); sequence MLLVCGPPGM.

Belongs to the nitrate reductase family. In terms of assembly, homodimer. It depends on FAD as a cofactor. Heme is required as a cofactor. Requires Mo-molybdopterin as cofactor.

The enzyme catalyses nitrite + NADP(+) + H2O = nitrate + NADPH + H(+). Functionally, nitrate reductase is a key enzyme involved in the first step of nitrate assimilation in plants, fungi and bacteria. In Pichia angusta (Yeast), this protein is Nitrate reductase [NADPH] (YNR1).